Reading from the N-terminus, the 211-residue chain is MAPSRNGMVLKPHFHKDWQRRVATWFNQPARKIRRRKARQAKARRIAPRPASGPIRPIVRCPTVRYHTKVRAGRGFSLEELRVAGIHKKVARTIGISVDPRRRNKSTESLQANVQRLKEYRSKLILFPRKPSAPKKGDSSAEELKLATQLTGPVMPVRNVYKKEKARVITEEEKNFKAFASLRMARANARLFGIRAKRAKEAAEQDVEKKK.

K16 is modified (N6-acetyllysine). S52, S77, and S106 each carry phosphoserine. Glycyl lysine isopeptide (Lys-Gly) (interchain with G-Cter in SUMO2) cross-links involve residues K123 and K145. K174 is covalently cross-linked (Glycyl lysine isopeptide (Lys-Gly) (interchain with G-Cter in SUMO1); alternate). Glycyl lysine isopeptide (Lys-Gly) (interchain with G-Cter in SUMO2); alternate cross-links involve residues K174 and K177. N6-acetyllysine; alternate is present on K177.

Belongs to the eukaryotic ribosomal protein eL13 family. Component of the 60S large ribosomal subunit (LSU). Higher levels of expression in benign breast lesions than in carcinomas.

Its subcellular location is the cytoplasm. Functionally, component of the ribosome, a large ribonucleoprotein complex responsible for the synthesis of proteins in the cell. The small ribosomal subunit (SSU) binds messenger RNAs (mRNAs) and translates the encoded message by selecting cognate aminoacyl-transfer RNA (tRNA) molecules. The large subunit (LSU) contains the ribosomal catalytic site termed the peptidyl transferase center (PTC), which catalyzes the formation of peptide bonds, thereby polymerizing the amino acids delivered by tRNAs into a polypeptide chain. The nascent polypeptides leave the ribosome through a tunnel in the LSU and interact with protein factors that function in enzymatic processing, targeting, and the membrane insertion of nascent chains at the exit of the ribosomal tunnel. As part of the LSU, it is probably required for its formation and the maturation of rRNAs. Plays a role in bone development. In Homo sapiens (Human), this protein is Large ribosomal subunit protein eL13 (RPL13).